Consider the following 60-residue polypeptide: Large ribosomal subunit protein uL30 (60 aa).

Belongs to the universal ribosomal protein uL30 family. Part of the 50S ribosomal subunit.

This chain is Large ribosomal subunit protein uL30, found in Histophilus somni (strain 2336) (Haemophilus somnus).